Here is a 177-residue protein sequence, read N- to C-terminus: Probable phospholipid hydroperoxide glutathione peroxidase (177 aa).

The active site involves C42.

It belongs to the glutathione peroxidase family.

The protein resides in the cytoplasm. It carries out the reaction a hydroperoxy polyunsaturated fatty acid + 2 glutathione = a hydroxy polyunsaturated fatty acid + glutathione disulfide + H2O. Its function is as follows. Protects cells and enzymes from oxidative damage, by catalyzing the reduction of hydrogen peroxide, lipid peroxides and organic hydroperoxide, by glutathione. The sequence is that of Probable phospholipid hydroperoxide glutathione peroxidase from Encephalitozoon cuniculi (strain GB-M1) (Microsporidian parasite).